Consider the following 569-residue polypeptide: Proline--tRNA ligase (569 aa).

Belongs to the class-II aminoacyl-tRNA synthetase family. ProS type 1 subfamily. In terms of assembly, homodimer.

It is found in the cytoplasm. The catalysed reaction is tRNA(Pro) + L-proline + ATP = L-prolyl-tRNA(Pro) + AMP + diphosphate. In terms of biological role, catalyzes the attachment of proline to tRNA(Pro) in a two-step reaction: proline is first activated by ATP to form Pro-AMP and then transferred to the acceptor end of tRNA(Pro). As ProRS can inadvertently accommodate and process non-cognate amino acids such as alanine and cysteine, to avoid such errors it has two additional distinct editing activities against alanine. One activity is designated as 'pretransfer' editing and involves the tRNA(Pro)-independent hydrolysis of activated Ala-AMP. The other activity is designated 'posttransfer' editing and involves deacylation of mischarged Ala-tRNA(Pro). The misacylated Cys-tRNA(Pro) is not edited by ProRS. The protein is Proline--tRNA ligase of Campylobacter hominis (strain ATCC BAA-381 / DSM 21671 / CCUG 45161 / LMG 19568 / NCTC 13146 / CH001A).